Here is a 320-residue protein sequence, read N- to C-terminus: Ferrochelatase (320 aa).

Fe cation contacts are provided by histidine 194 and glutamate 275.

This sequence belongs to the ferrochelatase family.

Its subcellular location is the cytoplasm. It carries out the reaction heme b + 2 H(+) = protoporphyrin IX + Fe(2+). Its pathway is porphyrin-containing compound metabolism; protoheme biosynthesis; protoheme from protoporphyrin-IX: step 1/1. In terms of biological role, catalyzes the ferrous insertion into protoporphyrin IX. In Xylella fastidiosa (strain 9a5c), this protein is Ferrochelatase.